Consider the following 223-residue polypeptide: Putative 3-methyladenine DNA glycosylase (223 aa).

It belongs to the DNA glycosylase MPG family.

This chain is Putative 3-methyladenine DNA glycosylase, found in Rickettsia typhi (strain ATCC VR-144 / Wilmington).